Here is a 126-residue protein sequence, read N- to C-terminus: Hydrogenase maturation factor HypA (126 aa).

Residue His2 participates in Ni(2+) binding. Zn(2+)-binding residues include Cys78, Cys81, Cys97, and Cys100.

This sequence belongs to the HypA/HybF family.

Involved in the maturation of [NiFe] hydrogenases. Required for nickel insertion into the metal center of the hydrogenase. The protein is Hydrogenase maturation factor HypA of Methanococcus maripaludis (strain C5 / ATCC BAA-1333).